Reading from the N-terminus, the 757-residue chain is Two pore calcium channel protein 1 (757 aa).

Residues 1 to 94 are Cytoplasmic-facing; sequence MRERGEMREA…NDTRFERAMR (94 aa). The disordered stretch occupies residues 24-48; sequence HSHGSGSSGTGSHTSGGGGGWRGSR. Positions 29 to 45 are enriched in gly residues; it reads GSSGTGSHTSGGGGGWR. A helical membrane pass occupies residues 95–115; sequence FYFVYLRLDWLWSLNLFALIL. Topologically, residues 116 to 152 are extracellular; it reads LNFLEKPLWCRGYSQHACDQRDLYFLGQLPYLSKTES. The helical transmembrane segment at 153-173 threads the bilayer; that stretch reads LIYEGLTLVILVMDIFYPLSY. Residues 174-188 lie on the Cytoplasmic side of the membrane; that stretch reads EGLNLFWKNTINKLK. A helical transmembrane segment spans residues 189 to 209; sequence VLLLFILACDILVFAFSPQPF. A topological domain (extracellular) is located at residue arginine 210. Residues 211 to 228 form a helical; Voltage-sensor membrane-spanning segment; that stretch reads VAPYIRVAFLIMNIRELR. At 229–233 the chain is on the cytoplasmic side; that stretch reads MCAVT. The chain crosses the membrane as a helical span at residues 234-254; sequence LVGMVGTYLNVLALSLLFLLF. At 255-270 the chain is on the extracellular side; the sequence is ASWLAYVTFEDTPQGK. The segment at residues 271 to 285 is an intramembrane region (pore-forming); sequence TVFSSYGTTLYQMFI. The Extracellular portion of the chain corresponds to 286–308; it reads LFTTSNNPDVWVPAYKSSRWSSL. The helical transmembrane segment at 309-329 threads the bilayer; the sequence is FFIVYVLLGVYFLTNLILAVI. Topologically, residues 330-453 are cytoplasmic; sequence YDSFKEQLAK…LCEWLKSFVR (124 aa). EF-hand domains lie at 347–382 and 388–423; these read TRKSILEKAFGIIDATGQGYLNKEQCLSLLDELNKY and TSREDFELIFAELDQSGDFKVTSEEFATLCNTIAIK. A helical membrane pass occupies residues 454-474; that stretch reads SPLFEYIVIFVLLMNLVAVII. Topologically, residues 475–493 are extracellular; sequence ETTLDIENSSSQKVWQEVE. Asparagine 482 is a glycosylation site (N-linked (GlcNAc...) asparagine). The helical transmembrane segment at 494–514 threads the bilayer; the sequence is FVFGWIYVIEMALKIFSLGFG. Residues 515–523 lie on the Cytoplasmic side of the membrane; sequence AYWMEGQNK. A helical transmembrane segment spans residues 524–544; sequence FDFVLTWTIFIGETLTFAFPS. Topologically, residues 545-553 are extracellular; sequence KLSFLSNGE. Residues 554-571 traverse the membrane as a helical; Voltage-sensor segment; that stretch reads WIRYLLLGRMLRLTRILL. Over 572 to 595 the chain is Cytoplasmic; sequence QVRRFRAFVATFFTLMSSLMPYLG. Residues 596–616 form a helical membrane-spanning segment; the sequence is IVFCTLCIYCSLGLQIFGGIV. Over 617–640 the chain is Extracellular; sequence YAGNPTLEETDLFSNDYLLFNFND. An intramembrane region (pore-forming) is located at residues 641 to 655; sequence YPSGMVTLFNLLVMG. Residues 656–676 lie on the Extracellular side of the membrane; it reads NWQAWMESYRQLTGSYWSLIY. Residues 677–697 traverse the membrane as a helical segment; the sequence is FVSFYLISVLLLLNLIVAFVL. At 698–757 the chain is on the cytoplasmic side; that stretch reads EAFFAEMELEKDGEADIQDPTLEGRNRRRSVRVRTKGTMVDILLHHMLSNELDGSQNRDQ.

This sequence belongs to the calcium channel alpha-1 subunit (TC 1.A.1.11) family. Two pore calcium channel subfamily. Homodimer. As to expression, expressed in shoot, mature leaf, cultured cells, and at lower level in roots.

The protein resides in the membrane. Its activity is regulated as follows. Inhibited by the VDCC blocker verapamil in yeast cells. Channel activity may be down-regulated by cytosolic Ca(2+) in rice cells. Inhibited by Al(3+). In terms of biological role, may function as one of the major voltage-gated Ca(2+) channel (VDCC) across the plasma membrane. May be involved in the regulation of cytosolic Ca(2+) and in growth and development. Acts as the major ROS-responsive Ca(2+) channel and is the possible target of Al-dependent inhibition. Determines sensitivity to T.viride xylanase elicitor. Plays a regulatory role in elicitor-induced defense responses and hypersensitive cell death. The protein is Two pore calcium channel protein 1 (TPC1) of Oryza sativa subsp. japonica (Rice).